A 75-amino-acid polypeptide reads, in one-letter code: Large ribosomal subunit protein bL31 (75 aa).

Cys16, Cys18, Cys38, and Cys41 together coordinate Zn(2+).

Belongs to the bacterial ribosomal protein bL31 family. Type A subfamily. In terms of assembly, part of the 50S ribosomal subunit. The cofactor is Zn(2+).

Its function is as follows. Binds the 23S rRNA. This chain is Large ribosomal subunit protein bL31, found in Nocardioides sp. (strain ATCC BAA-499 / JS614).